The primary structure comprises 70 residues: ATP synthase subunit c (70 aa).

2 helical membrane passes run 4 to 24 and 47 to 67; these read IAAA…NGLI and FIGI…SFIV.

The protein belongs to the ATPase C chain family. In terms of assembly, F-type ATPases have 2 components, F(1) - the catalytic core - and F(0) - the membrane proton channel. F(1) has five subunits: alpha(3), beta(3), gamma(1), delta(1), epsilon(1). F(0) has three main subunits: a(1), b(2) and c(10-14). The alpha and beta chains form an alternating ring which encloses part of the gamma chain. F(1) is attached to F(0) by a central stalk formed by the gamma and epsilon chains, while a peripheral stalk is formed by the delta and b chains.

It localises to the cell membrane. Its function is as follows. F(1)F(0) ATP synthase produces ATP from ADP in the presence of a proton or sodium gradient. F-type ATPases consist of two structural domains, F(1) containing the extramembraneous catalytic core and F(0) containing the membrane proton channel, linked together by a central stalk and a peripheral stalk. During catalysis, ATP synthesis in the catalytic domain of F(1) is coupled via a rotary mechanism of the central stalk subunits to proton translocation. Functionally, key component of the F(0) channel; it plays a direct role in translocation across the membrane. A homomeric c-ring of between 10-14 subunits forms the central stalk rotor element with the F(1) delta and epsilon subunits. This is ATP synthase subunit c from Staphylococcus carnosus (strain TM300).